Reading from the N-terminus, the 2169-residue chain is MVGRKVDREIIARRNSRRDGMMMKLNFCFFFCRRWWAFLLLQLHMLQALAQDDVAPYFKTEPGLPQIHLEGNRLVLTCLAEGSWPLEFKWLHNDSEITTYSSEYKYIIPALQRSDAGFYQCIVRNRMGALLQRRSEVQVAYMGNFMDANQKKTVTEGEAAVLNFMHIFSYPRPQVTWFRDGHKIIPSSRIAITLENQLVILATSVADAGGYYAQAVNEKNGENKTSPLIHLSIASATDPSDPTAPIIVIPPQNKSVVVGTSEVTLECVASARPVERLSIMWKRNGIKITSGISSFGRRLTITNPTSADVGMYFCEAKLRDSTEEPARAKAFISLMVPPYFTAEPEGVILAEVEKDVDILCQAMGVPIPSLVWYKDSVPLSKLQNPRYKVLLSGGLRIHALRPQDAGIFQCFASNKAGEIQTYTYLDVTNIKPAFIQPPEDTTVTEGMTAMLTCEVSGAPKPAISWKKGNQILASGSVQIPRFVLLESGGLQITPVFLQDAGNYTCHAVNSEGALNAFVMLTVWNRTFIVHPPENSTVIKGTTATLRCEATHDPRISIRYVWKKDSVVINPSSSSRITVEKDGTLLISQTWSGDIGDYTCEVISFGGNDSRMARLEVIELPHSPQNLLATLNSSYSRSVVLSWVRPFDGNSPVLYYMVELSENNSPWKVHLSNLDPKMTSVTVSGLTPARTYQFRVCAVNQVGKGQYSSETSRLMLPEEPPSAPPKNIVASGRTNQSIMVQWQPPPESEHNGVLHGYILRYRLAGLPGEYQYKNITSAEINYCLVTDLIIWTQYEIQVASYNGAGLGAFSRPVTEYTLQGVPTAPPQNVQVEAVNSTTIQFLWSPPPQQFINGINQGYKLLAWPVDAPGSVTVVTIAPDFHGVHSGCITNLKKYTTYYTSVLCFTTPGDGPRSAPQLLRTLEDKPGAVGHLSFTEILDTSLKVSWQEPVEKNGIITGYQLSWEVYGRNESRLTRTLTNTTLEYKITGLSSLTTYTIEVAAVTAKGSGWVTSSTISSGVPPELPGAPSNLVISNISPRSATLQFRPGYDGKTSICKWIVEGQVGVLGEEEEWVSLHEVDNEPDAQMLEVPNLTPYTHYRFRMRQVNVVGASPLSQPSRVIQTLQAPPDVAPGSVSVRTASESSLRMRWVPLPDTQYNGNPESVGYRIKFWRVDLQPSALLKVISDRLERECTIQDLEEWTEYELQIQAFNAIGAGPWNEVVGVRTRESVPSAPPENVSAEAVSSTQILLTWSAVPESEQNGLILGYKILYKAKDLDSEPRSQTVRGNHTQSCLLSGLRKYVLYEIRVLAFTRIGDGVPSSPVLTERTKDDAPGPPIRLVFPEVRLTSVRIVWQPPEEPNGIILGYQIAYRLASSSPNKFTTVEVGSTVRQFTATDLTPESAYIFRTSAKTRQGWGEPLEATVITTEKRERPAPPQQLTTPQSDVSSRSLQLHWVPGSDGSSPIRYFTVQVRELPNGDWQTYSSSISHEATSCIIESLNPFTSYKLRVKATNDIGDSDYSAETEAVTTLQDVPDEPPSSVLVTPHTTSSVLVQWQPPKAESLNGLLLGYRIYYRELDYDAGSATESKAVKNPSALRAELTPQSSFKTVNSSSALTTYELTQLKKYKRYEVLMTAYNVIGESPTSTPVEVFVGEAAPAMAPQNIQVNSLSASQLELTWDPPPADSQNGNIQGYKIYYWEGDVQNDTEKVKVFSSLRQLSASKNLTSHTRYLVCISAFNAAGDGPRSRPSAGRTHQAAPSAPSFLVFSEITSTTLNVSWGEPTAANGVLQGYRVVYEPLAPVQGVSKVVTVDIKGNWQRWLKVRDLTKGMTYLFRVQARTIAYGPELQANVTAGPAEGSPGSPHEILVTKSASGLTVQWTEGDSGEKPTTGYIIEARPSDEGLWDMFVKDIPRSATSYTVSLDKLKQGVTYEFRVVAVNEFGYGEPSVPSVAVSAQTEAPFYEEWWFLLVMALSSLILILLVVFALVLHGQSKKYKNCSTGKTISNVEESVTLDNGGFTALELNSRHLNIKSTFSKKNGTRSPPRPSPGGLHYSDEDICNKYNGAVLTEGLGLNEKPLEMSESEATDSDYEDELPKHSFVNHYMSDPTYYNSWKRQQKGVKHPTSYRYEECSASETEPYFQTVITTQSSGGVYTPTGQPAPGSRTPVTGFSSFV.

Residues 1 to 50 (MVGRKVDREIIARRNSRRDGMMMKLNFCFFFCRRWWAFLLLQLHMLQALA) form the signal peptide. At 51–1961 (QDDVAPYFKT…TEAPFYEEWW (1911 aa)) the chain is on the extracellular side. Ig-like C2-type domains are found at residues 56-138 (PYFK…SEVQ), 143-229 (GNFM…SPLI), 245-333 (PIIV…AFIS), 338-428 (PYFT…LDVT), and 432-521 (PAFI…VMLT). An intrachain disulfide couples Cys-78 to Cys-121. Residues Asn-93, Asn-223, and Asn-253 are each glycosylated (N-linked (GlcNAc...) asparagine). 3 disulfides stabilise this stretch: Cys-267/Cys-314, Cys-360/Cys-410, and Cys-453/Cys-505. N-linked (GlcNAc...) asparagine glycosylation is found at Asn-502, Asn-524, and Asn-534. Positions 525 to 615 (RTFIVHPPEN…GNDSRMARLE (91 aa)) constitute an Ig-like C2-type 6 domain. Residues Cys-547 and Cys-599 are joined by a disulfide bond. N-linked (GlcNAc...) asparagine glycosylation is found at Asn-607, Asn-631, Asn-734, Asn-773, Asn-834, Asn-967, and Asn-977. 13 consecutive Fibronectin type-III domains span residues 622–718 (SPQN…LPEE), 723–819 (PPKN…TLQG), 824–922 (PPQN…TLED), 926–1020 (AVGH…VPPE), 1024–1123 (APSN…TLQA), 1128–1226 (APGS…TRES), 1231–1328 (PPEN…TKDD), 1332–1426 (PPIR…TEKR), 1431–1528 (PPQQ…TLQD), 1533–1651 (PPSS…VGEA), 1656–1752 (APQN…THQA), 1756–1851 (APSF…AGPA), and 1854–1955 (SPGS…TEAP). Asn-1234 and Asn-1285 each carry an N-linked (GlcNAc...) asparagine glycan. Residues 1423–1443 (TEKRERPAPPQQLTTPQSDVS) are disordered. A compositionally biased stretch (polar residues) spans 1433–1443 (QQLTTPQSDVS). N-linked (GlcNAc...) asparagine glycans are attached at residues Asn-1606, Asn-1700, Asn-1719, Asn-1771, and Asn-1845. Residues 1962 to 1982 (FLLVMALSSLILILLVVFALV) form a helical membrane-spanning segment. Topologically, residues 1983–2169 (LHGQSKKYKN…TPVTGFSSFV (187 aa)) are cytoplasmic. Disordered stretches follow at residues 2028–2050 (TFSK…HYSD) and 2145–2169 (GGVY…SSFV). Residues 2160 to 2169 (TPVTGFSSFV) show a composition bias toward polar residues. A PDZ-binding motif is present at residues 2163-2169 (TGFSSFV).

It belongs to the sidekick family. Homodimer; mediates homophilic interactions to promote cell adhesion. In terms of tissue distribution, expressed by non-overlapping subsets of retinal neurons. SDK1, SDK2, DSCAM and DSCAML1 are expressed in non-overlapping subsets of interneurons and retinal ganglion cells (RGCs) that form synapses in distinct inner plexiform layer (IPL) sublaminae.

The protein resides in the cell membrane. The protein localises to the synapse. Adhesion molecule that promotes lamina-specific synaptic connections in the retina. Expressed in specific subsets of interneurons and retinal ganglion cells (RGCs) and promotes synaptic connectivity via homophilic interactions. This Gallus gallus (Chicken) protein is Protein sidekick-1.